We begin with the raw amino-acid sequence, 179 residues long: Large ribosomal subunit protein uL5 (179 aa).

It belongs to the universal ribosomal protein uL5 family. As to quaternary structure, part of the 50S ribosomal subunit; part of the 5S rRNA/L5/L18/L25 subcomplex. Contacts the 5S rRNA and the P site tRNA. Forms a bridge to the 30S subunit in the 70S ribosome.

In terms of biological role, this is one of the proteins that bind and probably mediate the attachment of the 5S RNA into the large ribosomal subunit, where it forms part of the central protuberance. In the 70S ribosome it contacts protein S13 of the 30S subunit (bridge B1b), connecting the 2 subunits; this bridge is implicated in subunit movement. Contacts the P site tRNA; the 5S rRNA and some of its associated proteins might help stabilize positioning of ribosome-bound tRNAs. This Vibrio campbellii (strain ATCC BAA-1116) protein is Large ribosomal subunit protein uL5.